The sequence spans 103 residues: Large ribosomal subunit protein eL21 (103 aa).

It belongs to the eukaryotic ribosomal protein eL21 family.

The protein is Large ribosomal subunit protein eL21 of Sulfolobus acidocaldarius (strain ATCC 33909 / DSM 639 / JCM 8929 / NBRC 15157 / NCIMB 11770).